A 359-amino-acid polypeptide reads, in one-letter code: Alanine racemase, biosynthetic (359 aa).

Catalysis depends on Lys-34, which acts as the Proton acceptor; specific for D-alanine. The residue at position 34 (Lys-34) is an N6-(pyridoxal phosphate)lysine. N6-carboxylysine is present on Lys-122. Arg-129 is a substrate binding site. Tyr-255 serves as the catalytic Proton acceptor; specific for L-alanine. Met-303 provides a ligand contact to substrate.

It belongs to the alanine racemase family. As to quaternary structure, homodimer. Pyridoxal 5'-phosphate serves as cofactor.

The enzyme catalyses L-alanine = D-alanine. It participates in amino-acid biosynthesis; D-alanine biosynthesis; D-alanine from L-alanine: step 1/1. The protein operates within cell wall biogenesis; peptidoglycan biosynthesis. Functionally, catalyzes the interconversion of L-alanine and D-alanine. Provides the D-alanine required for cell wall biosynthesis. The sequence is that of Alanine racemase, biosynthetic from Escherichia coli (strain K12).